Reading from the N-terminus, the 247-residue chain is Enolase-phosphatase E1 (247 aa).

Residues aspartate 12 and glutamate 14 each contribute to the Mg(2+) site. Substrate contacts are provided by residues 141–142 (SS) and lysine 175. Aspartate 200 lines the Mg(2+) pocket.

The protein belongs to the HAD-like hydrolase superfamily. MasA/MtnC family. In terms of assembly, monomer. Mg(2+) serves as cofactor.

It localises to the cytoplasm. It is found in the nucleus. The enzyme catalyses 5-methylsulfanyl-2,3-dioxopentyl phosphate + H2O = 1,2-dihydroxy-5-(methylsulfanyl)pent-1-en-3-one + phosphate. It participates in amino-acid biosynthesis; L-methionine biosynthesis via salvage pathway; L-methionine from S-methyl-5-thio-alpha-D-ribose 1-phosphate: step 3/6. The protein operates within amino-acid biosynthesis; L-methionine biosynthesis via salvage pathway; L-methionine from S-methyl-5-thio-alpha-D-ribose 1-phosphate: step 4/6. Functionally, bifunctional enzyme that catalyzes the enolization of 2,3-diketo-5-methylthiopentyl-1-phosphate (DK-MTP-1-P) into the intermediate 2-hydroxy-3-keto-5-methylthiopentenyl-1-phosphate (HK-MTPenyl-1-P), which is then dephosphorylated to form the acireductone 1,2-dihydroxy-3-keto-5-methylthiopentene (DHK-MTPene). The polypeptide is Enolase-phosphatase E1 (Drosophila willistoni (Fruit fly)).